The primary structure comprises 265 residues: tRNA pseudouridine synthase A (265 aa).

Asp52 (nucleophile) is an active-site residue. Tyr110 lines the substrate pocket. The interval 244–265 is disordered; sequence FYRDGPPARTPGGTTDAEEDEG.

The protein belongs to the tRNA pseudouridine synthase TruA family. In terms of assembly, homodimer.

The catalysed reaction is uridine(38/39/40) in tRNA = pseudouridine(38/39/40) in tRNA. Its function is as follows. Formation of pseudouridine at positions 38, 39 and 40 in the anticodon stem and loop of transfer RNAs. In Myxococcus xanthus, this protein is tRNA pseudouridine synthase A.